A 253-amino-acid polypeptide reads, in one-letter code: 3-deoxy-manno-octulosonate cytidylyltransferase (253 aa).

The protein belongs to the KdsB family.

The protein resides in the cytoplasm. The catalysed reaction is 3-deoxy-alpha-D-manno-oct-2-ulosonate + CTP = CMP-3-deoxy-beta-D-manno-octulosonate + diphosphate. It functions in the pathway nucleotide-sugar biosynthesis; CMP-3-deoxy-D-manno-octulosonate biosynthesis; CMP-3-deoxy-D-manno-octulosonate from 3-deoxy-D-manno-octulosonate and CTP: step 1/1. Its pathway is bacterial outer membrane biogenesis; lipopolysaccharide biosynthesis. In terms of biological role, activates KDO (a required 8-carbon sugar) for incorporation into bacterial lipopolysaccharide in Gram-negative bacteria. The sequence is that of 3-deoxy-manno-octulosonate cytidylyltransferase from Proteus mirabilis (strain HI4320).